A 266-amino-acid chain; its full sequence is Undecaprenyl-diphosphatase (266 aa).

8 helical membrane-spanning segments follow: residues 4-24 (ILSA…PISS), 39-59 (LSII…IIYY), 86-106 (LKLI…GTFI), 112-132 (MFTL…ILML), 145-165 (ILLA…PGIS), 182-202 (KSAF…AILL), 210-230 (IFMV…FVVG), and 246-266 (LYYF…FVRI).

This sequence belongs to the UppP family.

The protein localises to the cell inner membrane. The catalysed reaction is di-trans,octa-cis-undecaprenyl diphosphate + H2O = di-trans,octa-cis-undecaprenyl phosphate + phosphate + H(+). Its function is as follows. Catalyzes the dephosphorylation of undecaprenyl diphosphate (UPP). Confers resistance to bacitracin. The chain is Undecaprenyl-diphosphatase from Borreliella burgdorferi (strain ATCC 35210 / DSM 4680 / CIP 102532 / B31) (Borrelia burgdorferi).